The sequence spans 209 residues: ATP synthase subunit b', chloroplastic (209 aa).

The N-terminal 62 residues, Met1–Ala62, are a transit peptide targeting the chloroplast. Residues Ile67–Phe87 form a helical membrane-spanning segment.

This sequence belongs to the ATPase B chain family. F-type ATPases have 2 components, F(1) - the catalytic core - and F(0) - the membrane proton channel. F(1) has five subunits: alpha(3), beta(3), gamma(1), delta(1), epsilon(1). F(0) has four main subunits: a(1), b(1), b'(1) and c(10-14). The alpha and beta chains form an alternating ring which encloses part of the gamma chain. F(1) is attached to F(0) by a central stalk formed by the gamma and epsilon chains, while a peripheral stalk is formed by the delta, b and b' chains.

It localises to the plastid. The protein resides in the chloroplast thylakoid membrane. In terms of biological role, f(1)F(0) ATP synthase produces ATP from ADP in the presence of a proton or sodium gradient. F-type ATPases consist of two structural domains, F(1) containing the extramembraneous catalytic core and F(0) containing the membrane proton channel, linked together by a central stalk and a peripheral stalk. During catalysis, ATP synthesis in the catalytic domain of F(1) is coupled via a rotary mechanism of the central stalk subunits to proton translocation. Functionally, component of the F(0) channel, it forms part of the peripheral stalk, linking F(1) to F(0). The b'-subunit is a diverged and duplicated form of b found in plants and photosynthetic bacteria. This chain is ATP synthase subunit b', chloroplastic, found in Chlamydomonas reinhardtii (Chlamydomonas smithii).